The chain runs to 161 residues: uncharacterized protein (161 aa).

A helical membrane pass occupies residues 16-36 (KLGLVVAIFFFMMGTTVVVLY).

It is found in the membrane. This is an uncharacterized protein from Encephalitozoon cuniculi (strain GB-M1) (Microsporidian parasite).